We begin with the raw amino-acid sequence, 380 residues long: Cytochrome b (380 aa).

Helical transmembrane passes span 34–54 (FGSL…LLAT), 78–99 (WLIR…YLHI), 114–134 (WNTG…GYVL), and 179–199 (FFAL…IHLT). Heme b-binding residues include histidine 84 and histidine 98. Heme b contacts are provided by histidine 183 and histidine 197. Histidine 202 contributes to the a ubiquinone binding site. 4 helical membrane-spanning segments follow: residues 227–247 (LKDI…ALFS), 289–309 (LGGV…PLLH), 321–341 (LSQL…WVGS), and 348–368 (FIII…ILFP).

Belongs to the cytochrome b family. In terms of assembly, the cytochrome bc1 complex contains 11 subunits: 3 respiratory subunits (MT-CYB, CYC1 and UQCRFS1), 2 core proteins (UQCRC1 and UQCRC2) and 6 low-molecular weight proteins (UQCRH/QCR6, UQCRB/QCR7, UQCRQ/QCR8, UQCR10/QCR9, UQCR11/QCR10 and a cleavage product of UQCRFS1). This cytochrome bc1 complex then forms a dimer. The cofactor is heme b.

It is found in the mitochondrion inner membrane. In terms of biological role, component of the ubiquinol-cytochrome c reductase complex (complex III or cytochrome b-c1 complex) that is part of the mitochondrial respiratory chain. The b-c1 complex mediates electron transfer from ubiquinol to cytochrome c. Contributes to the generation of a proton gradient across the mitochondrial membrane that is then used for ATP synthesis. This Ciconia ciconia (White stork) protein is Cytochrome b (MT-CYB).